We begin with the raw amino-acid sequence, 606 residues long: Endo-beta-1,4-xylanase Xyn10C (606 aa).

Positions 1–19 (MKKIQQLLMLSLISSTLIA) are cleaved as a signal peptide. The N-palmitoyl cysteine moiety is linked to residue C20. C20 carries the S-diacylglycerol cysteine lipid modification. The disordered stretch occupies residues 23 to 64 (GGGGGSTPTTSSSPQSSSPASTPSSASSSSIISSSSLSSSLS). Positions 29-64 (TPTTSSSPQSSSPASTPSSASSSSIISSSSLSSSLS) are enriched in low complexity. The CBM15 domain occupies 91-242 (GNVVIEVDMA…KSVTITLAQE (152 aa)). A carbohydrate is bound by residues N106 and Q171. An intrachain disulfide couples C183 to C200. A carbohydrate is bound at residue Q217. One can recognise a GH10 domain in the interval 245 to 596 (SANVDHLRDL…KPALRGFADA (352 aa)). Substrate is bound by residues 296 to 299 (NIMK), H332, and N384. E385 serves as the catalytic Proton donor. E497 functions as the Nucleophile in the catalytic mechanism. W552 provides a ligand contact to substrate.

Belongs to the glycosyl hydrolase 10 (cellulase F) family.

It localises to the cell outer membrane. The enzyme catalyses Endohydrolysis of (1-&gt;4)-beta-D-xylosidic linkages in xylans.. Its pathway is glycan degradation; xylan degradation. Functionally, endo-acting xylanase which specifically cleaves internal linkages on the xylan backbone, releasing xylooligosaccharides. Is able to hydrolyze oat spelt xylan, the arabinoxylans from wheat and rye, and glucuronoxylan. Also displays very low activity against xylooligosaccharides. During the xylan degradation process, Xyn10C may act on the soluble xylans and long xylooligosaccharides products released by the secreted xylanases Xyn11A, Xyn11B and Xyn10A. This is Endo-beta-1,4-xylanase Xyn10C (xyn10C) from Cellvibrio japonicus (Pseudomonas fluorescens subsp. cellulosa).